Here is a 345-residue protein sequence, read N- to C-terminus: Phosphoribosylformylglycinamidine cyclo-ligase (345 aa).

The protein belongs to the AIR synthase family.

The protein localises to the cytoplasm. It catalyses the reaction 2-formamido-N(1)-(5-O-phospho-beta-D-ribosyl)acetamidine + ATP = 5-amino-1-(5-phospho-beta-D-ribosyl)imidazole + ADP + phosphate + H(+). It participates in purine metabolism; IMP biosynthesis via de novo pathway; 5-amino-1-(5-phospho-D-ribosyl)imidazole from N(2)-formyl-N(1)-(5-phospho-D-ribosyl)glycinamide: step 2/2. The sequence is that of Phosphoribosylformylglycinamidine cyclo-ligase from Aeromonas salmonicida (strain A449).